We begin with the raw amino-acid sequence, 415 residues long: Tyrosine--tRNA ligase (415 aa).

Tyr34 serves as a coordination point for L-tyrosine. The 'HIGH' region signature appears at 39–48 (PSADSLHLGN). 2 residues coordinate L-tyrosine: Tyr162 and Gln166. The 'KMSKS' region motif lies at 224 to 228 (KFGKS). Lys227 contacts ATP. Residues 346-413 (IKIIDLLNLA…KRNYFLIVWN (68 aa)) enclose the S4 RNA-binding domain.

Belongs to the class-I aminoacyl-tRNA synthetase family. TyrS type 1 subfamily. In terms of assembly, homodimer.

It localises to the cytoplasm. It carries out the reaction tRNA(Tyr) + L-tyrosine + ATP = L-tyrosyl-tRNA(Tyr) + AMP + diphosphate + H(+). Functionally, catalyzes the attachment of tyrosine to tRNA(Tyr) in a two-step reaction: tyrosine is first activated by ATP to form Tyr-AMP and then transferred to the acceptor end of tRNA(Tyr). In Ureaplasma urealyticum serovar 10 (strain ATCC 33699 / Western), this protein is Tyrosine--tRNA ligase.